Reading from the N-terminus, the 214-residue chain is Small ribosomal subunit protein uS5 (214 aa).

The S5 DRBM domain occupies 55 to 118 (LKYERLDVGI…RNAKLNITPV (64 aa)).

The protein belongs to the universal ribosomal protein uS5 family. In terms of assembly, part of the 30S ribosomal subunit. Contacts protein S4.

With S4 and S12 plays an important role in translational accuracy. In Staphylothermus marinus (strain ATCC 43588 / DSM 3639 / JCM 9404 / F1), this protein is Small ribosomal subunit protein uS5.